The following is a 232-amino-acid chain: Ubiquinone biosynthesis O-methyltransferase (232 aa).

Arginine 36, glycine 55, aspartate 76, and leucine 120 together coordinate S-adenosyl-L-methionine.

This sequence belongs to the methyltransferase superfamily. UbiG/COQ3 family.

It catalyses the reaction a 3-demethylubiquinol + S-adenosyl-L-methionine = a ubiquinol + S-adenosyl-L-homocysteine + H(+). The enzyme catalyses a 3-(all-trans-polyprenyl)benzene-1,2-diol + S-adenosyl-L-methionine = a 2-methoxy-6-(all-trans-polyprenyl)phenol + S-adenosyl-L-homocysteine + H(+). It participates in cofactor biosynthesis; ubiquinone biosynthesis. Its function is as follows. O-methyltransferase that catalyzes the 2 O-methylation steps in the ubiquinone biosynthetic pathway. This chain is Ubiquinone biosynthesis O-methyltransferase, found in Dechloromonas aromatica (strain RCB).